A 146-amino-acid polypeptide reads, in one-letter code: Hemoglobin subunit beta (146 aa).

The residue at position 1 (valine 1) is an N-acetylvaline. A Globin domain is found at histidine 2–histidine 146. Threonine 12 is subject to Phosphothreonine. Residue serine 44 is modified to Phosphoserine. At lysine 59 the chain carries N6-acetyllysine. Residue histidine 63 participates in heme b binding. Position 82 is an N6-acetyllysine (lysine 82). Histidine 92 lines the heme b pocket. Residue cysteine 93 is modified to S-nitrosocysteine. At lysine 144 the chain carries N6-acetyllysine.

This sequence belongs to the globin family. As to quaternary structure, heterotetramer of two alpha chains and two beta chains. In terms of tissue distribution, red blood cells.

Involved in oxygen transport from the lung to the various peripheral tissues. This chain is Hemoglobin subunit beta (HBB), found in Leontocebus fuscicollis (Brown-mantled tamarin).